A 711-amino-acid chain; its full sequence is Dixin (711 aa).

A lipid anchor (N-myristoyl glycine) is attached at Leu2. At Val13 the chain carries Phosphoserine. A Calponin-homology (CH) domain is found at Glu20 to Lys153. Residues Lys153–Lys326 form an actin-binding region. Ser212 carries the post-translational modification Phosphoserine. 3 disordered regions span residues Gly233 to Glu258, Val271 to Arg298, and Thr584 to Ala623. Residues Ser237–Ser254 are compositionally biased toward low complexity. Residue Ser257 is modified to Phosphoserine. Residues Ile278–Pro295 are compositionally biased toward basic and acidic residues. Positions Glu279–Glu452 form a coiled coil. Polar residues predominate over residues Pro597 to Ala623. The DIX domain occupies Gln600–Gly680. Ser618 carries the phosphoserine modification.

The protein belongs to the DIXDC1 family. May bind filamentous actin. Directly interacts (via DIX domain) with DVL2 (via DIX domain). Interacts with gamma-tubulin. Interacts with the complex composed of DVL2 and Rac. Interacts with AXIN1; competes with MAP3K1. Interacts with MAP3K4 preventing MAP3K4 interaction with AXIN1. Post-translationally, phosphorylated on tyrosine and serine residues. In terms of processing, polyubiquitinated, leading to its proteasomal degradation. WNT3A signaling increases DIXDC1 protein levels by inhibiting its ubiquitination and subsequent degradation. In terms of tissue distribution, abundantly expressed in brain and testis and to a lower extent in lung, kidney, colon, ovary and urinary bladder. Expressed in brain, liver, testis and spleen (at protein level). Expressed throughout the brain with strong expression in main and accessory olfactory bulbs, cerebral cortex, piriform cortex, hippocampus, habenular nucleus, dorsal thalamus, superior and inferior colliculi and cerebellum.

It localises to the cell junction. Its subcellular location is the focal adhesion. The protein localises to the cytoplasm. The protein resides in the cytoskeleton. It is found in the stress fiber. In terms of biological role, positive effector of the Wnt signaling pathway; activates WNT3A signaling via DVL2. Regulates JNK activation by AXIN1 and DVL2. The sequence is that of Dixin (Dixdc1) from Mus musculus (Mouse).